A 202-amino-acid polypeptide reads, in one-letter code: Small ribosomal subunit protein uS2 (202 aa).

The protein belongs to the universal ribosomal protein uS2 family.

The sequence is that of Small ribosomal subunit protein uS2 from Methanocorpusculum labreanum (strain ATCC 43576 / DSM 4855 / Z).